Reading from the N-terminus, the 328-residue chain is YDG domain-containing protein At5g47150 (328 aa).

The region spanning glycine 176–arginine 320 is the YDG domain.

It is found in the nucleus. The sequence is that of YDG domain-containing protein At5g47150 from Arabidopsis thaliana (Mouse-ear cress).